The primary structure comprises 293 residues: MLSSLIRDSFPLLILLPTFLAALGASVAGGVMGTYIVVKRIVSISGSISHAILGGIGLTLWIQYKLHLSFFPMYGAIVGAIFLALCIGKIHLKYQEREDSLIAMIWSVGMAIGIIFISRLPTFNGELINFLFGNILWVTPSDLYSLGIFDLLVLGIVVLCHTRFLALCFDERYTALNHCSVQLWYFLLLVLTAITIVMLIYVMGTILMLSMLVLPVAIACRFSYKMTRIMFISVLLNILCSFSGICIAYCLDFPVGPTISLLMGLGYTASLCVKKRYNPSTPSPVSPEINTNV.

7 helical membrane passes run 12-32, 41-61, 68-88, 101-121, 140-160, 183-203, and 253-273; these read LLILLPTFLAALGASVAGGVM, IVSISGSISHAILGGIGLTLW, LSFFPMYGAIVGAIFLALCIG, LIAMIWSVGMAIGIIFISRLP, PSDLYSLGIFDLLVLGIVVLC, LWYFLLLVLTAITIVMLIYVM, and FPVGPTISLLMGLGYTASLCV.

It belongs to the ABC-3 integral membrane protein family.

The protein localises to the cell inner membrane. Its function is as follows. Part of an ATP-driven transport system CPn_0541/CPn_0542/CPn_0543 for a metal. The polypeptide is Probable metal transport system membrane protein CPn_0543/CP_0209/CPj0543/CpB0565 (Chlamydia pneumoniae (Chlamydophila pneumoniae)).